Here is a 375-residue protein sequence, read N- to C-terminus: UPF0612 protein C569.003 (375 aa).

The protein belongs to the UPF0612 family.

Its subcellular location is the cytoplasm. The chain is UPF0612 protein C569.003 from Schizosaccharomyces pombe (strain 972 / ATCC 24843) (Fission yeast).